Here is a 161-residue protein sequence, read N- to C-terminus: Type II secretion system protein M (161 aa).

The Cytoplasmic segment spans residues M1 to R16. Residues C17–W36 form a helical membrane-spanning segment. Residues Q37 to K161 are Periplasmic-facing.

The protein belongs to the GSP M family. Type II secretion system is composed of four main components: the outer membrane complex, the inner membrane complex, the cytoplasmic secretion ATPase and the periplasm-spanning pseudopilus. Forms homodimers. Interacts with PulL/GspL. Interacts with PulE/GspE and PulF/GspF.

It is found in the cell inner membrane. In terms of biological role, inner membrane component of the type II secretion system required for the energy-dependent secretion of extracellular factors such as proteases and toxins from the periplasm. Plays a role in the complex assembly and recruits PulL resulting in a stable complex in the inner membrane. Provides thus a link between the energy-providing PulE protein in the cytoplasm and the rest of the T2SS machinery. The protein is Type II secretion system protein M (pulM) of Klebsiella pneumoniae.